The following is a 155-amino-acid chain: Protein-export protein SecB (155 aa).

The protein belongs to the SecB family. In terms of assembly, homotetramer, a dimer of dimers. One homotetramer interacts with 1 SecA dimer.

It is found in the cytoplasm. In terms of biological role, one of the proteins required for the normal export of preproteins out of the cell cytoplasm. It is a molecular chaperone that binds to a subset of precursor proteins, maintaining them in a translocation-competent state. It also specifically binds to its receptor SecA. The chain is Protein-export protein SecB from Citrobacter koseri (strain ATCC BAA-895 / CDC 4225-83 / SGSC4696).